Reading from the N-terminus, the 176-residue chain is MDQQVKQERLQGRLEPEIKEFRQERKTLQLATVDAQGRPNVSYAPFVQNQEGYFVLISHIARHARNLEVNPQVSIMMIEDETEAKQLFARKRLTFDAVASMVERDSELWCQVIAQMGERFGEIIDGLSQLQDFMLFRLQPEQGLFVKGFGQAYQVSGDDLVDFVHLEEGHRKISNG.

Residue His-170 participates in heme binding.

It belongs to the heme oxygenase HugZ/HutZ family. Homodimer. Interacts with HutX, leading to the transfer of the heme from HutX to apo-HutZ.

It catalyses the reaction heme b + 3 AH2 + 3 O2 + 2 H(+) = biliverdin IXbeta + CO + Fe(2+) + 3 A + 3 H2O. It carries out the reaction heme b + 3 AH2 + 3 O2 + 3 H(+) = biliverdin IXdelta + CO + Fe(2+) + 3 A + 3 H2O. Activity is pH-dependent. A proximal hydrogen bond between Asp-132 and the heme axial ligant His-170 is essential for heme degradation activity. Heme-degradation reaction is inhibited by iron chelators. Its function is as follows. Involved in heme degradation. Catalyzes the degradation of heme to biliverdin, with the release of iron. Forms biliverdin beta and delta. Binds heme with high efficiency. The chain is Heme oxygenase HutZ from Vibrio cholerae serotype O1 (strain ATCC 39315 / El Tor Inaba N16961).